Here is a 174-residue protein sequence, read N- to C-terminus: Trypsin inhibitor (174 aa).

Cystine bridges form between cysteine 40/cysteine 86 and cysteine 131/cysteine 140.

Belongs to the protease inhibitor I3 (leguminous Kunitz-type inhibitor) family. Heterodimer of an alpha and a beta chain linked by a disulfide bond.

Inhibits trypsin and chymotrypsin with a 1:1 stoichiometry, with dissociation constants of 1.56 nM and 120 nM respectively. Inhibits plasma kallikrein, factor XIIa and plasmin with dissociation constants of 5.0 nM, 150 nM and 18 nM respectively. Does not inhibit factor Xa, thrombin, tissue kallikrein or cysteine proteinases such as papain and bromelain. The protein is Trypsin inhibitor of Enterolobium contortisiliquum (Pacara earpod tree).